The primary structure comprises 31 residues: Nemertide alpha-5 (31 aa).

Intrachain disulfides connect Cys-2-Cys-16, Cys-9-Cys-20, and Cys-15-Cys-26. Residues Pro-28 and Pro-29 each carry the 4-hydroxyproline modification.

Belongs to the nemertide family. As to expression, confined to the epidermis and to the mucus layer.

The protein localises to the secreted. Highly potent toxin against both insect and some mammalian sodium channels (Nav). It potently inhibits inactivation of insect sodium channels of B.germanica (BgNav1) (EC(50)=7.8 nM) and also delays the inactivation of mammalian Nav with potent activity on Nav1.3/SCN3A and Nav1.4/SCN4A (hNav1.1/SCN1A; EC(50)=102.1 nM, rNav1.2/SCN2A; EC(50)=156.1 nM, rNav1.3/SCN3A; EC(50)=9.4 nM, rNav1.4/SCN4A; EC(50)=15.4 nM, hNav1.5/SCN5A; EC(50)=132.7 nM, mNav1.6/SCN8A; EC(50)=66.9 nM, hNav1.9/SCN9A; EC(50)=73 nM). 1 uM is enough to completely inhibits the inactivation, resulting in sustained non-inactivating currents. In addition, the toxin significantly enhances the recovery from inactivation, and the open state is not required for the toxin to interact with the channel. In vivo, injection into brine shrimp (Artemia salina) stops movement or causes death after 24 hours (EC(50)=0.4 uM). The chain is Nemertide alpha-5 from Ramphogordius pseudolacteus (Ribbon worm).